The primary structure comprises 354 residues: D-alanine--D-alanine ligase (354 aa).

An ATP-grasp domain is found at lysine 132 to glutamine 342. ATP is bound at residue glutamate 168–valine 223. Mg(2+) is bound by residues aspartate 295, glutamate 309, and asparagine 311.

This sequence belongs to the D-alanine--D-alanine ligase family. Mg(2+) serves as cofactor. Mn(2+) is required as a cofactor.

Its subcellular location is the cytoplasm. It catalyses the reaction 2 D-alanine + ATP = D-alanyl-D-alanine + ADP + phosphate + H(+). Its pathway is cell wall biogenesis; peptidoglycan biosynthesis. Functionally, cell wall formation. This is D-alanine--D-alanine ligase from Synechocystis sp. (strain ATCC 27184 / PCC 6803 / Kazusa).